A 400-amino-acid chain; its full sequence is Imidazolonepropionase (400 aa).

Residues H68 and H70 each coordinate Fe(3+). Zn(2+)-binding residues include H68 and H70. Residues R77, Y140, and H173 each coordinate 4-imidazolone-5-propanoate. Y140 lines the N-formimidoyl-L-glutamate pocket. H238 is a binding site for Fe(3+). Position 238 (H238) interacts with Zn(2+). Q241 is a 4-imidazolone-5-propanoate binding site. Fe(3+) is bound at residue D313. D313 contacts Zn(2+). N-formimidoyl-L-glutamate is bound by residues N315 and G317. T318 is a 4-imidazolone-5-propanoate binding site.

The protein belongs to the metallo-dependent hydrolases superfamily. HutI family. The cofactor is Zn(2+). Requires Fe(3+) as cofactor.

The protein resides in the cytoplasm. It carries out the reaction 4-imidazolone-5-propanoate + H2O = N-formimidoyl-L-glutamate. Its pathway is amino-acid degradation; L-histidine degradation into L-glutamate; N-formimidoyl-L-glutamate from L-histidine: step 3/3. Functionally, catalyzes the hydrolytic cleavage of the carbon-nitrogen bond in imidazolone-5-propanoate to yield N-formimidoyl-L-glutamate. It is the third step in the universal histidine degradation pathway. This chain is Imidazolonepropionase, found in Paracoccus denitrificans (strain Pd 1222).